We begin with the raw amino-acid sequence, 99 residues long: Aspartyl/glutamyl-tRNA(Asn/Gln) amidotransferase subunit C (99 aa).

It belongs to the GatC family. As to quaternary structure, heterotrimer of A, B and C subunits.

The enzyme catalyses L-glutamyl-tRNA(Gln) + L-glutamine + ATP + H2O = L-glutaminyl-tRNA(Gln) + L-glutamate + ADP + phosphate + H(+). The catalysed reaction is L-aspartyl-tRNA(Asn) + L-glutamine + ATP + H2O = L-asparaginyl-tRNA(Asn) + L-glutamate + ADP + phosphate + 2 H(+). In terms of biological role, allows the formation of correctly charged Asn-tRNA(Asn) or Gln-tRNA(Gln) through the transamidation of misacylated Asp-tRNA(Asn) or Glu-tRNA(Gln) in organisms which lack either or both of asparaginyl-tRNA or glutaminyl-tRNA synthetases. The reaction takes place in the presence of glutamine and ATP through an activated phospho-Asp-tRNA(Asn) or phospho-Glu-tRNA(Gln). The protein is Aspartyl/glutamyl-tRNA(Asn/Gln) amidotransferase subunit C of Solibacter usitatus (strain Ellin6076).